Consider the following 379-residue polypeptide: Stimulator of interferon genes protein (379 aa).

The Cytoplasmic segment spans residues 1–17 (MPYSNLHPSIPRPRSYR). The mediates interaction with ZDHHC1 and ZDHHC11 stretch occupies residues 1–190 (MPYSNLHPSI…MFNQLHNNML (190 aa)). Residues 18 to 34 (FKLAAFVLLVGSLMSLW) form a helical membrane-spanning segment. The Lumenal portion of the chain corresponds to 35–44 (MTGEPPSHTL). A helical transmembrane segment spans residues 45 to 69 (HYLALHVASQQLGLLLKKLCCLAEE). Residues 70–91 (LCHVQSRYQGSYWKAVRACVGS) are Cytoplasmic-facing. Cys88 carries S-palmitoyl cysteine lipidation. A helical transmembrane segment spans residues 92-106 (PICFMALILLSFYFY). At 107 to 116 (CSLENTSDLR) the chain is on the lumenal side. A helical transmembrane segment spans residues 117-134 (LAWHLGILVLSKSLSMTL). Residues 135-379 (DLQSLAPAEV…QPLPLRTDLI (245 aa)) lie on the Cytoplasmic side of the membrane. Lys151 is covalently cross-linked (Glycyl lysine isopeptide (Lys-Gly) (interchain with G-Cter in ubiquitin)). Residues 153–340 (FNVAHGLAWS…RHIRQEEKEE (188 aa)) form a cyclic dinucleotide-binding domain (CBD) region. Position 162 to 167 (162 to 167 (SYYIGY)) interacts with 2',3'-cGAMP. Residue Gly166 coordinates 3',3'-c-di-GMP. Residue Tyr167 coordinates 2',3'-cUAMP. Lys236 participates in a covalent cross-link: Glycyl lysine isopeptide (Lys-Gly) (interchain with G-Cter in ubiquitin). Arg238 is a binding site for 2',3'-cUAMP. Residues 238 to 241 (RAYS) and Thr263 contribute to the 2',3'-cGAMP site. 3',3'-c-di-GMP is bound by residues 238–241 (RAYS) and Thr263. Ser241 carries the post-translational modification Phosphoserine. Thr263 serves as a coordination point for 2',3'-cUAMP. Lys338 is covalently cross-linked (Glycyl lysine isopeptide (Lys-Gly) (interchain with G-Cter in SUMO)). A C-terminal tail (CTT) region spans residues 340-379 (EVTMSGPPTSVAPRPSLLSQEPRLLISGMEQPLPLRTDLI). A Phosphoserine modification is found at Ser355. Phosphoserine; by TBK1 is present on residues Ser358 and Ser366. Residues 363–366 (LLIS) carry the pLxIS motif motif.

The protein belongs to the STING family. Homodimer; forms a homodimer in absence of cyclic nucleotide (c-di-GMP or cGAMP); 'Lys-63'-linked ubiquitination at Lys-151 is required for homodimerization. Homotetramer; in presence of cyclic nucleotide (c-di-GMP or cGAMP), forms tetramers and higher-order oligomers through side-by-side packing. Interacts (when phosphorylated) with IRF3; following activation and phosphorylation on the pLxIS motif by TBK1, recruits IRF3. Interacts with RIGI, MAVS and SSR2. Interacts with RNF5 and TRIM56. Interacts with TBK1; when homodimer, leading to subsequent production of IFN-beta. Interacts with IFIT1 and IFIT2. Interacts with TRIM29; this interaction induces STING1 ubiquitination and subsequent degradation. Associates with the MHC-II complex. Interacts with STEEP1; interaction takes place upon cGAMP-activation and STING1 phosphorylation by MAP3K7/TAK1 and promotes STING1 translocation to COPII vesicles. Interacts with SEC24A, SEC24B and SEC24C; promoting translocation to COPII vesicles. Interacts (when ubiquitinated) with SQSTM1; leading to relocalization to autophagosomes. Interacts with SURF4. Interacts with HNRNPA2B1. Interacts with ZDHHC1; ZDHHC1 constitutively interacts with STING1 and in presence of DNA viruses activates it by promoting its cGAMP-induced oligomerization and the recruitment of downstream signaling components. Interacts with ZDHHC11; in presence of DNA viruses promotes the recruitment of IRF3 to STING1. Interacts with TOMM70. Interacts with TAB1; promoting recruitment of TAB1 to the endoplasmic reticulum membrane and subsequent activation of MAP3K7/TAK1. Interacts (via transmembrane domain) with TMEM203. Interacts with DDX41. Phosphorylation by TBK1 leads to activation and production of IFN-beta. Following cyclic nucleotide (c-di-GMP or cGAMP)-binding, activation and translocation from the endoplasmic reticulum, STING1 is phosphorylated by TBK1 at Ser-366 in the pLxIS motif. The phosphorylated pLxIS motif constitutes an IRF3-binding motif, leading to recruitment of the transcription factor IRF3 to induce type-I interferons and other cytokines. Phosphorylated on tyrosine residues upon MHC-II aggregation. Dephosphorylation by PPP6C leads to inactivation and decreased production of IFN-beta. Phosphorylation at Ser-358 is also required to activate IRF3. Phosphorylation at Ser-355 by MAP3K7/TAK1 facilitates its interaction with STEEP1, promoting STING1 translocation to COPII vesicles. In terms of processing, ubiquitinated. Ubiquitinated via 'Lys-63'-linked ubiquitin chains in response to double-stranded DNA treatment, leading to relocalization to autophagosomes and subsequent degradation; this process is dependent on SQSTM1. 'Lys-63'-linked ubiquitination mediated by TRIM56 at Lys-151 promotes homodimerization and recruitment of the antiviral kinase TBK1 and subsequent production of IFN-beta. 'Lys-48'-linked polyubiquitination at Lys-151 occurring after viral infection is mediated by RNF5 and leads to proteasomal degradation. 'Lys-11'-linked polyubiquitination at Lys-151 by RNF26 leads to stabilize STING1: it protects STING1 from RNF5-mediated 'Lys-48'-linked polyubiquitination. 'Lys-33'-linked and 'Lys-48'-linked deubiquitinated by USP20; leading to its stabilization and promotion of innate antiviral response. 'Lys-48'-linked deubiquitinated by USP44; leading to its stabilization and promotion of innate antiviral response. Deubiquitinated by USP13; leading to inhibition of innate antiviral response. 'Lys-63'-linked deubiquitinated by USP49; leading to inhibition of the subsequent recruitment of TBK1 to the signaling complex. 'Lys-63'-linked ubiquitination mediated by RNF39 promotes the activation of the cGAS-STING pathway. Post-translationally, sumoylated at Lys-338 by TRIM38 during the early phase of viral infection, promoting its stability by preventing its relocalization to autophagosomes and subsequent degradation. Desumoylated by SENP2 during the late phase of viral infection. Palmitoylation takes place in the Golgi apparatus and creates a platform for the recruitment of TBK1.

It is found in the endoplasmic reticulum membrane. The protein localises to the cytoplasm. The protein resides in the perinuclear region. It localises to the endoplasmic reticulum-Golgi intermediate compartment membrane. Its subcellular location is the golgi apparatus membrane. It is found in the cytoplasmic vesicle. The protein localises to the autophagosome membrane. The protein resides in the mitochondrion outer membrane. It localises to the cell membrane. It catalyses the reaction H(+)(in) = H(+)(out). In contrast to mouse protein, not activated by anticancer molecule 5,6-dimethylxanthenone 4-acetic acid (DMXAA). Facilitator of innate immune signaling that acts as a sensor of cytosolic DNA from bacteria and viruses and promotes the production of type I interferon (IFN-alpha and IFN-beta). Innate immune response is triggered in response to non-CpG double-stranded DNA from viruses and bacteria delivered to the cytoplasm. Acts by binding cyclic dinucleotides: recognizes and binds cyclic di-GMP (c-di-GMP), a second messenger produced by bacteria, cyclic UMP-AMP (2',3'-cUAMP), and cyclic GMP-AMP (cGAMP), a messenger produced by CGAS in response to DNA virus in the cytosol. Upon binding to c-di-GMP, cUAMP or cGAMP, STING1 oligomerizes, translocates from the endoplasmic reticulum and is phosphorylated by TBK1 on the pLxIS motif, leading to recruitment and subsequent activation of the transcription factor IRF3 to induce expression of type I interferon and exert a potent anti-viral state. Exhibits 2',3' phosphodiester linkage-specific ligand recognition: can bind both 2'-3' linked cGAMP (2'-3'-cGAMP) and 3'-3' linked cGAMP but is preferentially activated by 2'-3' linked cGAMP. The preference for 2'-3'-cGAMP, compared to other linkage isomers is probably due to the ligand itself, whichs adopts an organized free-ligand conformation that resembles the STING1-bound conformation and pays low energy costs in changing into the active conformation. In addition to promote the production of type I interferons, plays a direct role in autophagy. Following cGAMP-binding, STING1 buds from the endoplasmic reticulum into COPII vesicles, which then form the endoplasmic reticulum-Golgi intermediate compartment (ERGIC). The ERGIC serves as the membrane source for WIPI2 recruitment and LC3 lipidation, leading to formation of autophagosomes that target cytosolic DNA or DNA viruses for degradation by the lysosome. Promotes autophagy by acting as a proton channel that directs proton efflux from the Golgi to facilitate MAP1LC3B/LC3B lipidation. The autophagy- and interferon-inducing activities can be uncoupled and autophagy induction is independent of TBK1 phosphorylation. Autophagy is also triggered upon infection by bacteria: following c-di-GMP-binding, which is produced by live Gram-positive bacteria, promotes reticulophagy. May be involved in translocon function, the translocon possibly being able to influence the induction of type I interferons. May be involved in transduction of apoptotic signals via its association with the major histocompatibility complex class II (MHC-II). The sequence is that of Stimulator of interferon genes protein from Rattus norvegicus (Rat).